We begin with the raw amino-acid sequence, 152 residues long: Snaclec coagulation factor IX/factor X-binding protein subunit A (152 aa).

The N-terminal stretch at 1 to 23 (MGRFIFVSFGLLVVAASLSGTGA) is a signal peptide. 3 disulfides stabilise this stretch: C25–C36, C53–C150, and C125–C142. One can recognise a C-type lectin domain in the interval 32–151 (YEGHCYKAFE…CGQRIPFVCE (120 aa)). The Ca(2+) site is built by S64, E66, and E70. E151 is a Ca(2+) binding site.

Belongs to the snaclec family. Heterodimer of subunits A and B; disulfide-linked. In terms of tissue distribution, expressed by the venom gland.

Its subcellular location is the secreted. In terms of biological role, anticoagulant protein which binds to the gamma-carboxyglutamic acid-domain regions of factors IX (F9) and factor X (F10) in the presence of calcium with a 1 to 1 stoichiometry. The sequence is that of Snaclec coagulation factor IX/factor X-binding protein subunit A from Trimeresurus stejnegeri (Chinese green tree viper).